The chain runs to 340 residues: GTPase Obg (340 aa).

In terms of domain architecture, Obg spans 1-159 (MGFIDEVKLC…KHVLLKLKVL (159 aa)). Residues 160-329 (SDVGIIGMPN…LSEKLKKSNS (170 aa)) enclose the OBG-type G domain. GTP contacts are provided by residues 166-173 (GMPNAGKS), 191-195 (FTTVR), 212-215 (DIPG), 279-282 (NKCD), and 310-312 (NGD). Positions 173 and 193 each coordinate Mg(2+).

The protein belongs to the TRAFAC class OBG-HflX-like GTPase superfamily. OBG GTPase family. As to quaternary structure, monomer. The cofactor is Mg(2+).

Its subcellular location is the cytoplasm. Functionally, an essential GTPase which binds GTP, GDP and possibly (p)ppGpp with moderate affinity, with high nucleotide exchange rates and a fairly low GTP hydrolysis rate. Plays a role in control of the cell cycle, stress response, ribosome biogenesis and in those bacteria that undergo differentiation, in morphogenesis control. The polypeptide is GTPase Obg (Wolbachia sp. subsp. Drosophila simulans (strain wRi)).